The primary structure comprises 508 residues: DNA-directed RNA polymerase subunit Rpo1C (508 aa).

The tract at residues 1–123 (MIIWKDTAKN…REKYEYEKKV (123 aa)) is unknown. A DNA-directed RNA polymerase subunit Rpo1C region spans residues 124-508 (SSQVLDVIAE…IYKGYPKTKK (385 aa)).

Belongs to the RNA polymerase beta' chain family. Part of the RNA polymerase complex.

The protein localises to the cytoplasm. The enzyme catalyses RNA(n) + a ribonucleoside 5'-triphosphate = RNA(n+1) + diphosphate. Its function is as follows. DNA-dependent RNA polymerase (RNAP) catalyzes the transcription of DNA into RNA using the four ribonucleoside triphosphates as substrates. Forms part of the jaw domain. This Thermoplasma volcanium (strain ATCC 51530 / DSM 4299 / JCM 9571 / NBRC 15438 / GSS1) protein is DNA-directed RNA polymerase subunit Rpo1C.